A 616-amino-acid polypeptide reads, in one-letter code: Probable Xaa-Pro aminopeptidase P (616 aa).

4 residues coordinate Mn(2+): Asp-413, Asp-424, Glu-522, and Glu-536.

The protein belongs to the peptidase M24B family. Requires Mn(2+) as cofactor.

It carries out the reaction Release of any N-terminal amino acid, including proline, that is linked to proline, even from a dipeptide or tripeptide.. Its function is as follows. Catalyzes the removal of a penultimate prolyl residue from the N-termini of peptides. This Paracoccidioides lutzii (strain ATCC MYA-826 / Pb01) (Paracoccidioides brasiliensis) protein is Probable Xaa-Pro aminopeptidase P (AMPP).